The chain runs to 188 residues: Xanthine phosphoribosyltransferase (188 aa).

Xanthine-binding residues include leucine 20 and asparagine 27. Residue 127–131 participates in 5-phospho-alpha-D-ribose 1-diphosphate binding; sequence AHGEA. Lysine 155 is a xanthine binding site.

The protein belongs to the purine/pyrimidine phosphoribosyltransferase family. Xpt subfamily. As to quaternary structure, homodimer.

The protein resides in the cytoplasm. The enzyme catalyses XMP + diphosphate = xanthine + 5-phospho-alpha-D-ribose 1-diphosphate. The protein operates within purine metabolism; XMP biosynthesis via salvage pathway; XMP from xanthine: step 1/1. In terms of biological role, converts the preformed base xanthine, a product of nucleic acid breakdown, to xanthosine 5'-monophosphate (XMP), so it can be reused for RNA or DNA synthesis. The chain is Xanthine phosphoribosyltransferase from Heliobacterium modesticaldum (strain ATCC 51547 / Ice1).